Here is a 579-residue protein sequence, read N- to C-terminus: Probable receptor-like serine/threonine-protein kinase At5g57670 (579 aa).

Threonine 256 is modified (phosphothreonine). In terms of domain architecture, Protein kinase spans 267 to 542 (FHQGNIVGIG…LLTNGNEAEI (276 aa)). ATP contacts are provided by residues 273–281 (VGIGGYSEV) and lysine 295. Aspartate 392 (proton acceptor) is an active-site residue. Serine 396 is modified (phosphoserine). The residue at position 432 (threonine 432) is a Phosphothreonine.

This sequence belongs to the protein kinase superfamily. Ser/Thr protein kinase family.

It carries out the reaction L-seryl-[protein] + ATP = O-phospho-L-seryl-[protein] + ADP + H(+). The catalysed reaction is L-threonyl-[protein] + ATP = O-phospho-L-threonyl-[protein] + ADP + H(+). The protein is Probable receptor-like serine/threonine-protein kinase At5g57670 of Arabidopsis thaliana (Mouse-ear cress).